Here is a 240-residue protein sequence, read N- to C-terminus: MADS-box protein SVP (240 aa).

The MADS-box domain maps to 3 to 57; that stretch reads REKIQIRKIDNATARQVTFSKRRRGLFKKAEELSVLCDADVALIIFSSTGKLFEF. Positions 87-180 constitute a K-box domain; it reads QLVENSDHAR…GTQLTEENER (94 aa). Positions 202 to 240 are disordered; sequence VYEEGQSSESITNAGNSTGAPVDSESSDTSLRLGLPYGG. Residues 206-220 show a composition bias toward polar residues; the sequence is GQSSESITNAGNSTG.

In terms of assembly, forms a heterodimer with AP1 and SVP. Interacts with the SEU-LUG corepressor complex when complexed to AP1. Interacts with AGL15. Interacts with AGL16. In terms of tissue distribution, detected in roots and leaves. Expressed at very low levels in flowers and siliques. Present in floral meristems.

The protein localises to the nucleus. Its function is as follows. Transcription repressor that inhibit floral transition in the autonomous flowering pathway, independent of photoperiod and temperature. Acts in a dosage-dependent manner. Together with AGL24 and AP1, controls the identity of the floral meristem and regulates expression of class B, C and E genes. Promotes EFM expression to suppress flowering. The chain is MADS-box protein SVP from Arabidopsis thaliana (Mouse-ear cress).